A 356-amino-acid chain; its full sequence is NADH-quinone oxidoreductase subunit H (356 aa).

8 helical membrane passes run 18 to 38 (IVMV…IAYI), 87 to 107 (GVFL…WAVI), 120 to 140 (VGIL…IMGG), 166 to 186 (IGFV…SAIV), 202 to 222 (WLTF…VFYV), 257 to 277 (LFML…AILF), 292 to 312 (WVPG…LIAM), and 333 to 353 (FLPL…FAGI).

Belongs to the complex I subunit 1 family. As to quaternary structure, NDH-1 is composed of 14 different subunits. Subunits NuoA, H, J, K, L, M, N constitute the membrane sector of the complex.

Its subcellular location is the cell inner membrane. It carries out the reaction a quinone + NADH + 5 H(+)(in) = a quinol + NAD(+) + 4 H(+)(out). Its function is as follows. NDH-1 shuttles electrons from NADH, via FMN and iron-sulfur (Fe-S) centers, to quinones in the respiratory chain. The immediate electron acceptor for the enzyme in this species is believed to be ubiquinone. Couples the redox reaction to proton translocation (for every two electrons transferred, four hydrogen ions are translocated across the cytoplasmic membrane), and thus conserves the redox energy in a proton gradient. This subunit may bind ubiquinone. This chain is NADH-quinone oxidoreductase subunit H, found in Nitrobacter winogradskyi (strain ATCC 25391 / DSM 10237 / CIP 104748 / NCIMB 11846 / Nb-255).